Reading from the N-terminus, the 217-residue chain is Somatotropin (217 aa).

The first 27 residues, 1–27 (MMAAGPRTSLLLAFALLCLPWTQMVGA), serve as a signal peptide directing secretion. His-46 lines the Zn(2+) pocket. Cys-79 and Cys-190 are oxidised to a cystine. Ser-132 carries the phosphoserine modification. Residue Glu-199 coordinates Zn(2+). An intrachain disulfide couples Cys-207 to Cys-215.

The protein belongs to the somatotropin/prolactin family.

Its subcellular location is the secreted. Plays an important role in growth control. Its major role in stimulating body growth is to stimulate the liver and other tissues to secrete IGF1. It stimulates both the differentiation and proliferation of myoblasts. It also stimulates amino acid uptake and protein synthesis in muscle and other tissues. The polypeptide is Somatotropin (GH1) (Giraffa camelopardalis (Giraffe)).